A 331-amino-acid polypeptide reads, in one-letter code: Benzylsuccinate synthase activating enzyme (331 aa).

Positions 15–315 constitute a Radical SAM core domain; that stretch reads QDGPGIRTTI…VTIGGIVGIA (301 aa). Residues cysteine 29, cysteine 33, cysteine 36, cysteine 55, cysteine 58, cysteine 61, cysteine 65, cysteine 89, cysteine 92, cysteine 95, and cysteine 99 each contribute to the [4Fe-4S] cluster site. Position 35 to 37 (35 to 37) interacts with S-adenosyl-L-methionine; sequence WCH. 2 consecutive 4Fe-4S ferredoxin-type domains span residues 46-75 and 80-109; these read QEFYFYPDRCVGCGRCVAVCPAETSRLVRN and TIVQIDRTNCQRCMRCVAACLTEARAIVGQ. S-adenosyl-L-methionine contacts are provided by residues glycine 139, 189–191, and histidine 263; that span reads DLK.

This sequence belongs to the organic radical-activating enzymes family. [4Fe-4S] cluster is required as a cofactor.

The catalysed reaction is glycyl-[protein] + reduced [flavodoxin] + S-adenosyl-L-methionine = glycin-2-yl radical-[protein] + semiquinone [flavodoxin] + 5'-deoxyadenosine + L-methionine + H(+). Its pathway is xenobiotic degradation; toluene degradation [regulation]. In terms of biological role, activation of benzylsuccinate synthase under anaerobic conditions by generation of an organic free radical, using S-adenosylmethionine and reduced flavodoxin as cosubstrates to produce 5'-deoxy-adenosine. In Thauera aromatica, this protein is Benzylsuccinate synthase activating enzyme (bssD).